The sequence spans 121 residues: uncharacterized protein (121 aa).

Positions 7–121 (IFCKIVRGEV…GGREMSWPPG (115 aa)) constitute an HIT domain. The Histidine triad motif motif lies at 105 to 109 (HLHLH).

This is an uncharacterized protein from Aquifex aeolicus (strain VF5).